Here is a 32-residue protein sequence, read N- to C-terminus: Cyclotide glopa A (32 aa).

A cross-link (cyclopeptide (Gly-Asn)) is located at residues 1-32; it reads GGSIPCIETCVWTGCFLVPGCSCKSDKKCYLN. 3 disulfides stabilise this stretch: cysteine 6/cysteine 21, cysteine 10/cysteine 23, and cysteine 15/cysteine 29.

Post-translationally, this is a cyclic peptide.

Functionally, probably participates in a plant defense mechanism. This Gloeospermum pauciflorum protein is Cyclotide glopa A.